We begin with the raw amino-acid sequence, 361 residues long: Salt tolerance receptor-like cytoplasmic kinase 1 (361 aa).

3 S-palmitoyl cysteine lipidation sites follow: C5, C10, and C14. Positions 67–347 (GFSSRVIGHG…RALQEKTSAL (281 aa)) constitute a Protein kinase domain. ATP is bound by residues 73-81 (IGHGGFSTV) and K95. The active-site Proton acceptor is the D195.

Belongs to the protein kinase superfamily. Ser/Thr protein kinase family. In terms of assembly, self-interacts. Interacts with CATA, CATB and CATC at the plasma membrane. Post-translationally, palmitoylated. Palmotylation at Cys-5, Cys-10 and Cys-14 by DHHC9 is required for plasma membrane targeting and STRK1 function. Autophosphorylated. In terms of tissue distribution, accumulates in seeds. Mainly expressed in young roots, and, to a lower extent, in leaf veins, seedlings, stems, leaf sheath and young spikelet.

The protein resides in the cell membrane. It carries out the reaction L-seryl-[protein] + ATP = O-phospho-L-seryl-[protein] + ADP + H(+). The enzyme catalyses L-threonyl-[protein] + ATP = O-phospho-L-threonyl-[protein] + ADP + H(+). The catalysed reaction is L-tyrosyl-[protein] + ATP = O-phospho-L-tyrosyl-[protein] + ADP + H(+). Its function is as follows. Acts probably as a dual specificity protein kinase. Regulates hydrogen peroxide (H(2)O(2)) homeostasis and improves salt tolerance by phosphorylating tyrosine residues of CATC thus activating its catalase activity. Promotes growth at the seedling stage and prevents grain yield loss under salt stress conditions. In Oryza sativa subsp. japonica (Rice), this protein is Salt tolerance receptor-like cytoplasmic kinase 1.